A 79-amino-acid chain; its full sequence is Acyl carrier protein (79 aa).

Residues 1–79 form the Carrier domain; it reads MTKEQILVDV…DVVSYIETQV (79 aa). Ser-39 is subject to O-(pantetheine 4'-phosphoryl)serine.

This sequence belongs to the acyl carrier protein (ACP) family. 4'-phosphopantetheine is transferred from CoA to a specific serine of apo-ACP by AcpS. This modification is essential for activity because fatty acids are bound in thioester linkage to the sulfhydryl of the prosthetic group.

It is found in the cytoplasm. Its pathway is lipid metabolism; fatty acid biosynthesis. In terms of biological role, carrier of the growing fatty acid chain in fatty acid biosynthesis. This Exiguobacterium sibiricum (strain DSM 17290 / CCUG 55495 / CIP 109462 / JCM 13490 / 255-15) protein is Acyl carrier protein.